A 2287-amino-acid polypeptide reads, in one-letter code: Protein Ycf2 (2287 aa).

Position 1632–1639 (1632–1639) interacts with ATP; it reads GSIGTGRS.

Belongs to the Ycf2 family.

Its subcellular location is the plastid. It is found in the chloroplast stroma. Probable ATPase of unknown function. Its presence in a non-photosynthetic plant (Epifagus virginiana) and experiments in tobacco indicate that it has an essential function which is probably not related to photosynthesis. In Calycanthus floridus var. glaucus (Eastern sweetshrub), this protein is Protein Ycf2.